The sequence spans 132 residues: U-scoloptoxin(05)-Er3a (132 aa).

An N-terminal signal peptide occupies residues 1–19 (MRSWFVFVALLAVVFLPSS).

This sequence belongs to the scoloptoxin-05 family. Contains 5 disulfide bonds. In terms of tissue distribution, expressed by the venom gland.

Its subcellular location is the secreted. The chain is U-scoloptoxin(05)-Er3a from Ethmostigmus rubripes (Giant centipede).